The chain runs to 1422 residues: YEATS domain-containing protein 2 (1422 aa).

Lysine 9 participates in a covalent cross-link: Glycyl lysine isopeptide (Lys-Gly) (interchain with G-Cter in SUMO2). Positions lysine 47–alanine 80 form a coiled coil. Lysine 113 is covalently cross-linked (Glycyl lysine isopeptide (Lys-Gly) (interchain with G-Cter in SUMO2)). Positions glutamate 117 to threonine 198 are disordered. Phosphoserine occurs at positions 118, 120, and 157. Residues proline 119–aspartate 148 show a composition bias toward polar residues. The segment covering phenylalanine 149–leucine 165 has biased composition (basic and acidic residues). Residues serine 166 to asparagine 176 show a composition bias toward polar residues. Residues threonine 177–threonine 198 show a composition bias toward basic and acidic residues. Lysine 189 participates in a covalent cross-link: Glycyl lysine isopeptide (Lys-Gly) (interchain with G-Cter in SUMO2). The YEATS domain maps to glutamate 200–glutamate 345. 2 histone H3K27cr binding regions span residues histidine 259–serine 261 and tryptophan 282–glutamate 284. A Glycyl lysine isopeptide (Lys-Gly) (interchain with G-Cter in SUMO2) cross-link involves residue lysine 370. Threonine 407 bears the Phosphothreonine mark. Phosphoserine is present on residues serine 447, serine 463, serine 465, serine 471, and serine 473. The segment at serine 465 to valine 486 is disordered. Phosphothreonine is present on threonine 478. Residue lysine 487 forms a Glycyl lysine isopeptide (Lys-Gly) (interchain with G-Cter in SUMO2) linkage. Over residues threonine 513–glycine 535 the composition is skewed to polar residues. The interval threonine 513–lysine 540 is disordered. Serine 536 carries the post-translational modification Phosphoserine. Lysine 552 is covalently cross-linked (Glycyl lysine isopeptide (Lys-Gly) (interchain with G-Cter in SUMO2)). Phosphoserine is present on serine 575. Lysine 592 is covalently cross-linked (Glycyl lysine isopeptide (Lys-Gly) (interchain with G-Cter in SUMO2)). Position 627 is a phosphoserine (serine 627). Glycyl lysine isopeptide (Lys-Gly) (interchain with G-Cter in SUMO2) cross-links involve residues lysine 649 and lysine 773. The tract at residues glycine 794 to glycine 842 is disordered. Residues alanine 797–glycine 842 show a composition bias toward gly residues. Lysine 923 participates in a covalent cross-link: Glycyl lysine isopeptide (Lys-Gly) (interchain with G-Cter in SUMO2). Lysine 1110 participates in a covalent cross-link: Glycyl lysine isopeptide (Lys-Gly) (interchain with G-Cter in SUMO1); alternate. Lysine 1110 is covalently cross-linked (Glycyl lysine isopeptide (Lys-Gly) (interchain with G-Cter in SUMO2); alternate). A Glycyl lysine isopeptide (Lys-Gly) (interchain with G-Cter in SUMO2) cross-link involves residue lysine 1130. The residue at position 1219 (threonine 1219) is a Phosphothreonine. Glycyl lysine isopeptide (Lys-Gly) (interchain with G-Cter in SUMO2) cross-links involve residues lysine 1222 and lysine 1285.

As to quaternary structure, component of the ADA2A-containing complex (ATAC), composed of KAT14, KAT2A, TADA2L, TADA3L, ZZ3, MBIP, WDR5, YEATS2, SGF29 and DR1.

The protein resides in the nucleus. Chromatin reader component of the ATAC complex, a complex with histone acetyltransferase activity on histones H3 and H4. YEATS2 specifically recognizes and binds histone H3 crotonylated at 'Lys-27' (H3K27cr). Crotonylation marks active promoters and enhancers and confers resistance to transcriptional repressors. The chain is YEATS domain-containing protein 2 from Homo sapiens (Human).